A 1697-amino-acid chain; its full sequence is Phosphatidylinositol 3-kinase 3 (1697 aa).

Disordered stretches follow at residues 57 to 91, 169 to 229, 244 to 279, 310 to 376, 398 to 428, and 440 to 504; these read RSINNNNNNNNNNNNNNNNNNNNNNNNNNNNTQPC, INNN…DSSI, KTTETKETSTGTSPLEKSPSKGFIISPKKPEEENEI, KKNN…NSVG, SWTSSKPTSSSIGFASSPQNNGKPLNISGSS, and DLLK…NNDE. 3 stretches are compositionally biased toward low complexity: residues 60 to 87, 170 to 196, and 212 to 222; these read NNNNNNNNNNNNNNNNNNNNNNNNNNNN, NNNNNNNNNNNNNNNNNNNNNNNNNNN, and NNNSNNNNNIN. Low complexity-rich tracts occupy residues 312–374 and 398–408; these read NNNN…TTNS and SWTSSKPTSSS. Polar residues-rich tracts occupy residues 409–428 and 444–456; these read IGFASSPQNNGKPLNISGSS and SPSSSPPTQSDIF. Residues 457–503 show a composition bias toward low complexity; sequence NENNNNNNNNNNNNNNNNNNNNNNNNNNNNNNNNEELINNNNNNNND. The PI3K-RBD domain maps to 737–823; the sequence is PEFFVIRVHL…KGEIDLTMVE (87 aa). Positions 888-1036 constitute a C2 PI3K-type domain; sequence VTENLQVRLL…QAIIIAFEFK (149 aa). Residues 1060–1238 enclose the PIK helical domain; that stretch reads GNELPVVTME…RVLSSGFLRY (179 aa). The PI3K/PI4K catalytic domain occupies 1304–1581; it reads IPEKCKSMDS…LIHESIGTLT (278 aa). The segment at 1310–1316 is G-loop; it reads SMDSAKV. A catalytic loop region spans residues 1447–1455; that stretch reads GIGDRHNDN. An activation loop region spans residues 1466-1492; that stretch reads HIDFGHFLGNFKTFAGFQREKAPFVLT. The span at 1609–1625 shows a compositional bias: low complexity; it reads ASSLNLNKNKPSSQSKL. The tract at residues 1609–1697 is disordered; sequence ASSLNLNKNK…DTEKENSIDK (89 aa). 5 tandem repeats follow at residues 1622–1626, 1627–1631, 1632–1636, 1642–1646, and 1647–1651. A 5 X 5 AA approximate repeats region spans residues 1622-1651; sequence QSKLDLSRSDLSRSDSSRSDSSRLDLSRSD. Composition is skewed to basic and acidic residues over residues 1626–1681 and 1688–1697; these read DLSR…DKDN and DTEKENSIDK. Residues 1659 to 1672 are 7 X 2 AA tandem repeats of K-E; the sequence is KEKEKEKEKEKEKE.

Belongs to the PI3/PI4-kinase family.

It carries out the reaction a 1,2-diacyl-sn-glycero-3-phospho-(1D-myo-inositol) + ATP = a 1,2-diacyl-sn-glycero-3-phospho-(1D-myo-inositol-3-phosphate) + ADP + H(+). The polypeptide is Phosphatidylinositol 3-kinase 3 (pikC) (Dictyostelium discoideum (Social amoeba)).